A 416-amino-acid polypeptide reads, in one-letter code: Gamma-glutamyl phosphate reductase (416 aa).

This sequence belongs to the gamma-glutamyl phosphate reductase family.

It is found in the cytoplasm. It carries out the reaction L-glutamate 5-semialdehyde + phosphate + NADP(+) = L-glutamyl 5-phosphate + NADPH + H(+). The protein operates within amino-acid biosynthesis; L-proline biosynthesis; L-glutamate 5-semialdehyde from L-glutamate: step 2/2. Its function is as follows. Catalyzes the NADPH-dependent reduction of L-glutamate 5-phosphate into L-glutamate 5-semialdehyde and phosphate. The product spontaneously undergoes cyclization to form 1-pyrroline-5-carboxylate. This chain is Gamma-glutamyl phosphate reductase, found in Salmonella paratyphi A (strain AKU_12601).